Here is a 104-residue protein sequence, read N- to C-terminus: Large ribosomal subunit protein eL42 (104 aa).

The protein belongs to the eukaryotic ribosomal protein eL42 family. Component of the large ribosomal subunit. Mature ribosomes consist of a small (40S) and a large (60S) subunit. The 40S subunit contains about 32 different proteins and 1 molecule of RNA (18S). The 60S subunit contains about 42 different proteins and 3 molecules of RNA (28S, 5.8S and 5S).

The protein localises to the cytoplasm. Functionally, component of the ribosome, a large ribonucleoprotein complex responsible for the synthesis of proteins in the cell. The small ribosomal subunit (SSU) binds messenger RNAs (mRNAs) and translates the encoded message by selecting cognate aminoacyl-transfer RNA (tRNA) molecules. The large subunit (LSU) contains the ribosomal catalytic site termed the peptidyl transferase center (PTC), which catalyzes the formation of peptide bonds, thereby polymerizing the amino acids delivered by tRNAs into a polypeptide chain. The nascent polypeptides leave the ribosome through a tunnel in the LSU and interact with protein factors that function in enzymatic processing, targeting, and the membrane insertion of nascent chains at the exit of the ribosomal tunnel. In Plasmodium falciparum (isolate 3D7), this protein is Large ribosomal subunit protein eL42.